The chain runs to 317 residues: Acetyl-coenzyme A carboxylase carboxyl transferase subunit alpha (317 aa).

One can recognise a CoA carboxyltransferase C-terminal domain in the interval 33 to 294 (NLDDEITRLQ…KKRLLADLAD (262 aa)).

This sequence belongs to the AccA family. In terms of assembly, acetyl-CoA carboxylase is a heterohexamer composed of biotin carboxyl carrier protein (AccB), biotin carboxylase (AccC) and two subunits each of ACCase subunit alpha (AccA) and ACCase subunit beta (AccD).

Its subcellular location is the cytoplasm. It carries out the reaction N(6)-carboxybiotinyl-L-lysyl-[protein] + acetyl-CoA = N(6)-biotinyl-L-lysyl-[protein] + malonyl-CoA. The protein operates within lipid metabolism; malonyl-CoA biosynthesis; malonyl-CoA from acetyl-CoA: step 1/1. Functionally, component of the acetyl coenzyme A carboxylase (ACC) complex. First, biotin carboxylase catalyzes the carboxylation of biotin on its carrier protein (BCCP) and then the CO(2) group is transferred by the carboxyltransferase to acetyl-CoA to form malonyl-CoA. The chain is Acetyl-coenzyme A carboxylase carboxyl transferase subunit alpha from Histophilus somni (strain 129Pt) (Haemophilus somnus).